Reading from the N-terminus, the 385-residue chain is MEKLILVKYAPEIFLKGLNRNKFEKRLRDNIGKKLEGIKIEFIHDSGRYFIKTNEINESIKRLSNVFGVSEVAVVDVVEIDMDSIKKSSLEKLIEAEGKTFKVSTNRANKNFEGNSTDISRDIGAYILSNYNDEMNVDVKTPDILINVEIRNKNAYVWSNKDITKGVAGLPYGMNGSTMLMLSGGIDSPVAGYLMAKRGVELNCVYYHSHPYTSERAKDKVKDLAKILASYTEKINLYVVPFTEIQMAILDKCREDELTIIMRRFMMRVACKIAEEKGIQSVTSGESIGQVASQTMEGLIVSNDCADRPVFRPLIAMDKTDIMDIARKIETYETSILPYEDCCTIFVPKHPKTKPRVDSIREEEKKLNIDELVRKAIDEMENIVY.

Positions 57-161 constitute a THUMP domain; it reads NESIKRLSNV…NKNAYVWSNK (105 aa). Residues 181-182, 206-207, Arg-263, Gly-285, and Gln-294 contribute to the ATP site; these read ML and YY.

It belongs to the ThiI family.

The protein resides in the cytoplasm. The catalysed reaction is [ThiI sulfur-carrier protein]-S-sulfanyl-L-cysteine + a uridine in tRNA + 2 reduced [2Fe-2S]-[ferredoxin] + ATP + H(+) = [ThiI sulfur-carrier protein]-L-cysteine + a 4-thiouridine in tRNA + 2 oxidized [2Fe-2S]-[ferredoxin] + AMP + diphosphate. It catalyses the reaction [ThiS sulfur-carrier protein]-C-terminal Gly-Gly-AMP + S-sulfanyl-L-cysteinyl-[cysteine desulfurase] + AH2 = [ThiS sulfur-carrier protein]-C-terminal-Gly-aminoethanethioate + L-cysteinyl-[cysteine desulfurase] + A + AMP + 2 H(+). It participates in cofactor biosynthesis; thiamine diphosphate biosynthesis. In terms of biological role, catalyzes the ATP-dependent transfer of a sulfur to tRNA to produce 4-thiouridine in position 8 of tRNAs, which functions as a near-UV photosensor. Also catalyzes the transfer of sulfur to the sulfur carrier protein ThiS, forming ThiS-thiocarboxylate. This is a step in the synthesis of thiazole, in the thiamine biosynthesis pathway. The sulfur is donated as persulfide by IscS. The polypeptide is Probable tRNA sulfurtransferase (Clostridium botulinum (strain Alaska E43 / Type E3)).